The primary structure comprises 101 residues: Small ribosomal subunit protein uS14 (101 aa).

This sequence belongs to the universal ribosomal protein uS14 family. Part of the 30S ribosomal subunit. Contacts proteins S3 and S10.

Functionally, binds 16S rRNA, required for the assembly of 30S particles and may also be responsible for determining the conformation of the 16S rRNA at the A site. The polypeptide is Small ribosomal subunit protein uS14 (Salmonella paratyphi A (strain ATCC 9150 / SARB42)).